Here is a 458-residue protein sequence, read N- to C-terminus: BTB/POZ domain-containing protein At5g41330 (458 aa).

The region spanning 11–72 is the BTB domain; sequence NVVSINVGGR…LRTGNLPARS (62 aa). WD repeat units follow at residues 259 to 305, 360 to 399, and 421 to 458; these read DSAI…MVWE, LNERRGVGSKIESYGNHVFCSSKGSGIELWSEVITGLVGN, and SGENKITGLAFGGNRMFVTRKDQQSVQVWQSPSRGISI.

The protein operates within protein modification; protein ubiquitination. Its function is as follows. May act as a substrate-specific adapter of an E3 ubiquitin-protein ligase complex (CUL3-RBX1-BTB) which mediates the ubiquitination and subsequent proteasomal degradation of target proteins. The protein is BTB/POZ domain-containing protein At5g41330 of Arabidopsis thaliana (Mouse-ear cress).